A 191-amino-acid polypeptide reads, in one-letter code: Small ribosomal subunit protein uS9c (191 aa).

Positions 166-191 (TQDSRVKERRKYGLKKARKASQYHKR) are disordered. Residues 172-191 (KERRKYGLKKARKASQYHKR) show a composition bias toward basic residues.

The protein belongs to the universal ribosomal protein uS9 family.

The protein resides in the plastid. It localises to the chloroplast. This Chlamydomonas reinhardtii (Chlamydomonas smithii) protein is Small ribosomal subunit protein uS9c (rps9).